A 99-amino-acid chain; its full sequence is Plastocyanin (99 aa).

The 99-residue stretch at 1–99 (VEVLLGASDG…AGMVGQVTVN (99 aa)) folds into the Plastocyanin-like domain. Residues His37, Cys84, His87, and Met92 each coordinate Cu cation.

This sequence belongs to the plastocyanin family. Cu(2+) serves as cofactor.

The protein resides in the plastid. The protein localises to the chloroplast thylakoid membrane. Its function is as follows. Participates in electron transfer between P700 and the cytochrome b6-f complex in photosystem I. The sequence is that of Plastocyanin (PETE) from Vicia faba (Broad bean).